A 259-amino-acid chain; its full sequence is 5'-nucleotidase SurE (259 aa).

Residues D8, D9, S41, and N100 each contribute to the a divalent metal cation site.

This sequence belongs to the SurE nucleotidase family. A divalent metal cation serves as cofactor.

It is found in the cytoplasm. It carries out the reaction a ribonucleoside 5'-phosphate + H2O = a ribonucleoside + phosphate. Functionally, nucleotidase that shows phosphatase activity on nucleoside 5'-monophosphates. The polypeptide is 5'-nucleotidase SurE (Natranaerobius thermophilus (strain ATCC BAA-1301 / DSM 18059 / JW/NM-WN-LF)).